Consider the following 1134-residue polypeptide: Envelopment polyprotein (1134 aa).

An N-terminal signal peptide occupies residues 1–18; it reads MGIWKWLVMASLVWPVLT. Residues 19–487 are Lumenal-facing; the sequence is LRNVYDMKIE…GFHGWATAAL (469 aa). 8 disulfides stabilise this stretch: Cys-29–Cys-151, Cys-63–Cys-157, Cys-109–Cys-128, Cys-133–Cys-138, Cys-175–Cys-185, Cys-210–Cys-247, Cys-234–Cys-351, and Cys-380–Cys-389. Residue Asn-134 is glycosylated (N-linked (GlcNAc...) asparagine; by host). N-linked (GlcNAc...) asparagine; by host glycans are attached at residues Asn-235 and Asn-347. Asn-399 carries an N-linked (GlcNAc...) asparagine; by host glycan. Cystine bridges form between Cys-405-Cys-424 and Cys-452-Cys-475. Residues 488-508 form a helical membrane-spanning segment; that stretch reads LVTFCFGWVLIPAVTFIILAI. Topologically, residues 509-627 are cytoplasmic; the sequence is LKFIANIFHT…LNLFRYKSRC (119 aa). Positions 516 to 533 are binding to the ribonucleoprotein; the sequence is FHTSNQENRLKSVLRKIK. CCHC-type zinc fingers lie at residues 545–565 and 570–591; these read CDVC…GVSC and CPYC…YKVC. Binding to the ribonucleoprotein regions lie at residues 588 to 605, 592 to 603, and 611 to 625; these read YKVC…KKTV, QVTHRFRDDLKK, and TPGC…RYKS. The ITAM domain occupies 611–634; that stretch reads TPGCYRTLNLFRYKSRCYIFTMWI. A YxxL motif is present at residues 615–618; sequence YRTL. A helical transmembrane segment spans residues 628 to 648; sequence YIFTMWIFLLVLESILWAASA. Residues 649–1104 lie on the Lumenal side of the membrane; sequence SETPLTPVWN…EWISGIFSGN (456 aa). 7 cysteine pairs are disulfide-bonded: Cys-734-Cys-769, Cys-738-Cys-776, Cys-750-Cys-884, Cys-764-Cys-895, Cys-779-Cys-903, Cys-805-Cys-814, and Cys-822-Cys-831. The fusion loop stretch occupies residues 756 to 776; the sequence is YQYETSWGCNPSDCPGCGTGC. A glycan (N-linked (GlcNAc...) asparagine; by host) is linked at Asn-927. 5 disulfide bridges follow: Cys-969/Cys-999, Cys-992/Cys-1044, Cys-1009/Cys-1014, Cys-1045/Cys-1050, and Cys-1084/Cys-1088. A helical membrane pass occupies residues 1105-1125; that stretch reads WIVLIVLCVFLLFSLVLLSIL. A binding to the ribonucleoprotein region spans residues 1121–1134; sequence LLSILCPVRKHKKS. Topologically, residues 1126 to 1134 are cytoplasmic; sequence CPVRKHKKS.

It belongs to the hantavirus envelope glycoprotein family. Homodimer. Homotetramer; forms heterotetrameric Gn-Gc spikes in the pre-fusion conformation. Interacts (via C-terminus) with the nucleoprotein. Interacts with host TUFM; this interaction contributes to the virus-induced degradation of mitochondria by autophagy, which leads to degradation of host MAVS and inhibition of type I interferon (IFN) responses. Interacts with host MAP1LC3B; this interaction contributes to the virus-induced degradation of mitochondria by autophagy, which leads to degradation of host MAVS and inhibition of type I interferon (IFN) responses. In terms of assembly, homodimer. Homotetramer; forms heterotetrameric Gn-Gc spikes in the pre-fusion conformation. Homotrimer; forms homotrimer in the post-fusion conformation at acidic pH. Interacts (via C-terminus) with the nucleoprotein. In terms of processing, envelope polyprotein precursor is quickly cleaved in vivo just after synthesis, presumably by host signal peptidase.

It localises to the virion membrane. Its subcellular location is the host cell surface. The protein localises to the host Golgi apparatus membrane. The protein resides in the host endoplasmic reticulum membrane. It is found in the host mitochondrion. Functionally, forms homotetramers with glycoprotein C at the surface of the virion. Attaches the virion to host cell receptors including integrin ITGAV/ITGB3. This attachment induces virion internalization predominantly through clathrin-dependent endocytosis. May also bind to host C1QBP for virus entry into the host cell. Mediates the assembly and budding of infectious virus particles through its interaction with the nucleocapsid protein and the viral genome. May dysregulate normal immune and endothelial cell responses through an ITAM motif. Translocates to mitochondria, binds to host TUFM and recruits MAP1LC3B. These interactions induce mitochondrial autophagy and therefore destruction of host MAVS leading to inhibition of type I interferon (IFN) responses. Concomitant breakdown of glycoprotein N is apparently prevented by the nucleoprotein that may inhibit Gn-stimulated autophagosome-lysosome fusion. Interacts with the viral genomic RNA. Forms homotetramers with glycoprotein N at the surface of the virion. Attaches the virion to host cell receptors including integrin ITGAV/ITGB3. This attachment induces virion internalization predominantly through clathrin-dependent endocytosis. May also bind to host C1QBP for virus entry into the host cell. Class II fusion protein that promotes fusion of viral membrane with host endosomal membrane after endocytosis of the virion. In Apodemus agrarius (Eurasian field mouse), this protein is Envelopment polyprotein (GP).